The following is a 614-amino-acid chain: DNA mismatch repair protein MutL (614 aa).

Belongs to the DNA mismatch repair MutL/HexB family.

This protein is involved in the repair of mismatches in DNA. It is required for dam-dependent methyl-directed DNA mismatch repair. May act as a 'molecular matchmaker', a protein that promotes the formation of a stable complex between two or more DNA-binding proteins in an ATP-dependent manner without itself being part of a final effector complex. The sequence is that of DNA mismatch repair protein MutL from Chlorobium phaeovibrioides (strain DSM 265 / 1930) (Prosthecochloris vibrioformis (strain DSM 265)).